We begin with the raw amino-acid sequence, 431 residues long: Enolase (431 aa).

Residues histidine 157 and glutamate 166 each contribute to the substrate site. Glutamate 209 (proton donor) is an active-site residue. Mg(2+) contacts are provided by aspartate 244, glutamate 293, and aspartate 318. Positions 293 and 318 each coordinate substrate. Lysine 343 serves as the catalytic Proton acceptor. Substrate contacts are provided by residues 370-373 (SHRS) and lysine 394.

Belongs to the enolase family. Homodimer. It depends on Mg(2+) as a cofactor.

The protein resides in the cytoplasm. It carries out the reaction (2R)-2-phosphoglycerate = phosphoenolpyruvate + H2O. Its pathway is carbohydrate degradation; glycolysis; pyruvate from D-glyceraldehyde 3-phosphate: step 4/5. The sequence is that of Enolase (ENO) from Fasciola hepatica (Liver fluke).